Consider the following 944-residue polypeptide: Isoleucine--tRNA ligase (944 aa).

The 'HIGH' region signature appears at Pro58–His68. Glu563 contributes to the L-isoleucyl-5'-AMP binding site. The 'KMSKS' region signature appears at Lys604–Ser608. Residue Lys607 coordinates ATP. Positions 907, 910, 927, and 930 each coordinate Zn(2+).

Belongs to the class-I aminoacyl-tRNA synthetase family. IleS type 1 subfamily. As to quaternary structure, monomer. The cofactor is Zn(2+).

It is found in the cytoplasm. The enzyme catalyses tRNA(Ile) + L-isoleucine + ATP = L-isoleucyl-tRNA(Ile) + AMP + diphosphate. Functionally, catalyzes the attachment of isoleucine to tRNA(Ile). As IleRS can inadvertently accommodate and process structurally similar amino acids such as valine, to avoid such errors it has two additional distinct tRNA(Ile)-dependent editing activities. One activity is designated as 'pretransfer' editing and involves the hydrolysis of activated Val-AMP. The other activity is designated 'posttransfer' editing and involves deacylation of mischarged Val-tRNA(Ile). This Salmonella typhi protein is Isoleucine--tRNA ligase.